A 294-amino-acid chain; its full sequence is Lipoyl synthase (294 aa).

[4Fe-4S] cluster is bound by residues cysteine 41, cysteine 46, cysteine 52, cysteine 67, cysteine 71, cysteine 74, and serine 281. Residues 53 to 270 (FNNGTATFMI…KLESLAMGFT (218 aa)) form the Radical SAM core domain.

Belongs to the radical SAM superfamily. Lipoyl synthase family. [4Fe-4S] cluster is required as a cofactor.

The protein resides in the cytoplasm. The catalysed reaction is [[Fe-S] cluster scaffold protein carrying a second [4Fe-4S](2+) cluster] + N(6)-octanoyl-L-lysyl-[protein] + 2 oxidized [2Fe-2S]-[ferredoxin] + 2 S-adenosyl-L-methionine + 4 H(+) = [[Fe-S] cluster scaffold protein] + N(6)-[(R)-dihydrolipoyl]-L-lysyl-[protein] + 4 Fe(3+) + 2 hydrogen sulfide + 2 5'-deoxyadenosine + 2 L-methionine + 2 reduced [2Fe-2S]-[ferredoxin]. It participates in protein modification; protein lipoylation via endogenous pathway; protein N(6)-(lipoyl)lysine from octanoyl-[acyl-carrier-protein]: step 2/2. Its function is as follows. Catalyzes the radical-mediated insertion of two sulfur atoms into the C-6 and C-8 positions of the octanoyl moiety bound to the lipoyl domains of lipoate-dependent enzymes, thereby converting the octanoylated domains into lipoylated derivatives. This Baumannia cicadellinicola subsp. Homalodisca coagulata protein is Lipoyl synthase.